A 142-amino-acid polypeptide reads, in one-letter code: Mitochondrial import receptor subunit TOM22 homolog (142 aa).

Positions 1 to 11 (MAAAVAAAGAG) are enriched in low complexity. Residues 1 to 42 (MAAAVAAAGAGEPQSPDELLPKGDAEKPEEELEEDDDEELDE) form a disordered region. N-acetylalanine is present on Ala2. Topologically, residues 2–83 (AAAVAAAGAG…AQKMYRFSRA (82 aa)) are cytoplasmic. Ser15 is modified (phosphoserine). The segment covering 27–42 (KPEEELEEDDDEELDE) has biased composition (acidic residues). Residues 41 to 50 (DETLSERLWG) form an import sequence; necessary for mitochondrion outer membrane localization and integration in the TOM complex region. Thr43 carries the post-translational modification Phosphothreonine. Ser45 bears the Phosphoserine mark. The tract at residues 83-103 (AALWIGTTSFMILVLPVVFET) is TMD; necessary for mitochondrion outer membrane localization and integration in the TOM complex. A helical membrane pass occupies residues 84–103 (ALWIGTTSFMILVLPVVFET). At 104–142 (EKLQMEQQQQLQQRQILLGPNTGLSGGMPGALPSLPGKI) the chain is on the mitochondrial intermembrane side. The tract at residues 123–142 (PNTGLSGGMPGALPSLPGKI) is C-tail signal; necessary for mitochondrion outer membrane localization and integration in the TOM complex.

Belongs to the Tom22 family. As to quaternary structure, forms part of the preprotein translocase complex of the outer mitochondrial membrane (TOM complex) which consists of at least 7 different proteins (TOMM5, TOMM6, TOMM7, TOMM20, TOMM22, TOMM40 and TOMM70). Interacts with TOMM40. Interacts with PPP2R2B. In terms of tissue distribution, ubiquitous.

The protein localises to the mitochondrion outer membrane. Functionally, central receptor component of the translocase of the outer membrane of mitochondria (TOM complex) responsible for the recognition and translocation of cytosolically synthesized mitochondrial preproteins. Together with the peripheral receptor TOM20 functions as the transit peptide receptor and facilitates the movement of preproteins into the translocation pore. Required for the translocation across the mitochondrial outer membrane of cytochrome P450 monooxygenases. This chain is Mitochondrial import receptor subunit TOM22 homolog (TOMM22), found in Homo sapiens (Human).